The chain runs to 320 residues: o-succinylbenzoate synthase (320 aa).

Lysine 133 (proton donor) is an active-site residue. Aspartate 161, glutamate 190, and aspartate 213 together coordinate Mg(2+). The Proton acceptor role is filled by lysine 235.

Belongs to the mandelate racemase/muconate lactonizing enzyme family. MenC type 1 subfamily. It depends on a divalent metal cation as a cofactor.

It carries out the reaction (1R,6R)-6-hydroxy-2-succinyl-cyclohexa-2,4-diene-1-carboxylate = 2-succinylbenzoate + H2O. The protein operates within quinol/quinone metabolism; 1,4-dihydroxy-2-naphthoate biosynthesis; 1,4-dihydroxy-2-naphthoate from chorismate: step 4/7. Its pathway is quinol/quinone metabolism; menaquinone biosynthesis. In terms of biological role, converts 2-succinyl-6-hydroxy-2,4-cyclohexadiene-1-carboxylate (SHCHC) to 2-succinylbenzoate (OSB). In Salmonella newport (strain SL254), this protein is o-succinylbenzoate synthase.